The chain runs to 108 residues: ATP synthase peripheral stalk subunit F6, mitochondrial (108 aa).

The transit peptide at 1-32 (MVLQRIFRLSSVLRSAVSVHLKRNIGVTAVAF) directs the protein to the mitochondrion. Lys41, Lys46, and Lys79 each carry N6-acetyllysine. Lys84, Lys94, and Lys99 each carry N6-acetyllysine; alternate. N6-succinyllysine; alternate is present on residues Lys84, Lys94, and Lys99. N6-acetyllysine is present on Lys105. Ser108 carries the post-translational modification Phosphoserine.

The protein belongs to the eukaryotic ATPase subunit F6 family. As to quaternary structure, component of the ATP synthase complex composed at least of ATP5F1A/subunit alpha, ATP5F1B/subunit beta, ATP5MC1/subunit c (homooctomer), MT-ATP6/subunit a, MT-ATP8/subunit 8, ATP5ME/subunit e, ATP5MF/subunit f, ATP5MG/subunit g, ATP5MK/subunit k, ATP5MJ/subunit j, ATP5F1C/subunit gamma, ATP5F1D/subunit delta, ATP5F1E/subunit epsilon, ATP5PF/subunit F6, ATP5PB/subunit b, ATP5PD/subunit d, ATP5PO/subunit OSCP. ATP synthase complex consists of a soluble F(1) head domain (subunits alpha(3) and beta(3)) - the catalytic core - and a membrane F(0) domain - the membrane proton channel (subunits c, a, 8, e, f, g, k and j). These two domains are linked by a central stalk (subunits gamma, delta, and epsilon) rotating inside the F1 region and a stationary peripheral stalk (subunits F6, b, d, and OSCP).

The protein resides in the mitochondrion. The protein localises to the mitochondrion inner membrane. Subunit F6, of the mitochondrial membrane ATP synthase complex (F(1)F(0) ATP synthase or Complex V) that produces ATP from ADP in the presence of a proton gradient across the membrane which is generated by electron transport complexes of the respiratory chain. ATP synthase complex consist of a soluble F(1) head domain - the catalytic core - and a membrane F(1) domain - the membrane proton channel. These two domains are linked by a central stalk rotating inside the F(1) region and a stationary peripheral stalk. During catalysis, ATP synthesis in the catalytic domain of F(1) is coupled via a rotary mechanism of the central stalk subunits to proton translocation. In vivo, can only synthesize ATP although its ATP hydrolase activity can be activated artificially in vitro. Part of the complex F(0) domain. Part of the complex F(0) domain and the peripheric stalk, which acts as a stator to hold the catalytic alpha(3)beta(3) subcomplex and subunit a/ATP6 static relative to the rotary elements. In Mus musculus (Mouse), this protein is ATP synthase peripheral stalk subunit F6, mitochondrial.